Consider the following 698-residue polypeptide: Gametogenetin-binding protein 2 (698 aa).

The tract at residues 555-575 (CMADPGNRETSGNTTHTEFHR) is disordered.

It is found in the cytoplasm. Its function is as follows. May be involved in spermatogenesis. The chain is Gametogenetin-binding protein 2 (GGNBP2) from Gallus gallus (Chicken).